We begin with the raw amino-acid sequence, 832 residues long: Adhesin AWP2 (832 aa).

Residues 1 to 25 (MRKLPLFMAWKFWLICLYIIKVAST) form the signal peptide. 16 N-linked (GlcNAc...) asparagine glycosylation sites follow: N187, N290, N372, N390, N435, N448, N472, N482, N507, N512, N515, N534, N562, N579, N695, and N721. The disordered stretch occupies residues 722 to 747 (QTTSPSMHTTSLVGSENGVSAKTVND).

The protein resides in the secreted. It is found in the cell wall. Mediates cell-substrate adhesion and promotes biofilm formation. This Candida glabrata (strain ATCC 2001 / BCRC 20586 / JCM 3761 / NBRC 0622 / NRRL Y-65 / CBS 138) (Yeast) protein is Adhesin AWP2.